A 331-amino-acid chain; its full sequence is Biotin synthase (331 aa).

Residues Pro-52–Arg-277 form the Radical SAM core domain. 3 residues coordinate [4Fe-4S] cluster: Cys-67, Cys-71, and Cys-74. 3 residues coordinate [2Fe-2S] cluster: Cys-110, Cys-202, and Arg-272.

It belongs to the radical SAM superfamily. Biotin synthase family. As to quaternary structure, homodimer. It depends on [4Fe-4S] cluster as a cofactor. [2Fe-2S] cluster serves as cofactor.

The catalysed reaction is (4R,5S)-dethiobiotin + (sulfur carrier)-SH + 2 reduced [2Fe-2S]-[ferredoxin] + 2 S-adenosyl-L-methionine = (sulfur carrier)-H + biotin + 2 5'-deoxyadenosine + 2 L-methionine + 2 oxidized [2Fe-2S]-[ferredoxin]. Its pathway is cofactor biosynthesis; biotin biosynthesis; biotin from 7,8-diaminononanoate: step 2/2. Its function is as follows. Catalyzes the conversion of dethiobiotin (DTB) to biotin by the insertion of a sulfur atom into dethiobiotin via a radical-based mechanism. This is Biotin synthase from Salinispora tropica (strain ATCC BAA-916 / DSM 44818 / JCM 13857 / NBRC 105044 / CNB-440).